The following is a 250-amino-acid chain: tRNA (guanine-N(1)-)-methyltransferase (250 aa).

Residues Gly116 and 136–141 contribute to the S-adenosyl-L-methionine site; that span reads IGDYVL.

This sequence belongs to the RNA methyltransferase TrmD family. Homodimer.

It localises to the cytoplasm. It catalyses the reaction guanosine(37) in tRNA + S-adenosyl-L-methionine = N(1)-methylguanosine(37) in tRNA + S-adenosyl-L-homocysteine + H(+). In terms of biological role, specifically methylates guanosine-37 in various tRNAs. The protein is tRNA (guanine-N(1)-)-methyltransferase of Pseudomonas putida (strain GB-1).